The primary structure comprises 481 residues: UDP-N-acetylmuramate--L-alanine ligase (481 aa).

Residue 115–121 (GTHGKTT) participates in ATP binding.

Belongs to the MurCDEF family.

The protein localises to the cytoplasm. The enzyme catalyses UDP-N-acetyl-alpha-D-muramate + L-alanine + ATP = UDP-N-acetyl-alpha-D-muramoyl-L-alanine + ADP + phosphate + H(+). The protein operates within cell wall biogenesis; peptidoglycan biosynthesis. In terms of biological role, cell wall formation. The chain is UDP-N-acetylmuramate--L-alanine ligase from Rhodospirillum rubrum (strain ATCC 11170 / ATH 1.1.1 / DSM 467 / LMG 4362 / NCIMB 8255 / S1).